The primary structure comprises 413 residues: Glutamate-1-semialdehyde 2,1-aminomutase (413 aa).

Lys260 carries the post-translational modification N6-(pyridoxal phosphate)lysine.

The protein belongs to the class-III pyridoxal-phosphate-dependent aminotransferase family. HemL subfamily. The cofactor is pyridoxal 5'-phosphate.

Its subcellular location is the cytoplasm. It carries out the reaction (S)-4-amino-5-oxopentanoate = 5-aminolevulinate. It participates in porphyrin-containing compound metabolism; protoporphyrin-IX biosynthesis; 5-aminolevulinate from L-glutamyl-tRNA(Glu): step 2/2. This chain is Glutamate-1-semialdehyde 2,1-aminomutase, found in Methanoregula boonei (strain DSM 21154 / JCM 14090 / 6A8).